Consider the following 446-residue polypeptide: Na(+)-translocating NADH-quinone reductase subunit A (446 aa).

It belongs to the NqrA family. In terms of assembly, composed of six subunits; NqrA, NqrB, NqrC, NqrD, NqrE and NqrF.

It catalyses the reaction a ubiquinone + n Na(+)(in) + NADH + H(+) = a ubiquinol + n Na(+)(out) + NAD(+). Its function is as follows. NQR complex catalyzes the reduction of ubiquinone-1 to ubiquinol by two successive reactions, coupled with the transport of Na(+) ions from the cytoplasm to the periplasm. NqrA to NqrE are probably involved in the second step, the conversion of ubisemiquinone to ubiquinol. The chain is Na(+)-translocating NADH-quinone reductase subunit A from Histophilus somni (strain 129Pt) (Haemophilus somnus).